The sequence spans 154 residues: Ribosome maturation factor RimP (154 aa).

It belongs to the RimP family.

It localises to the cytoplasm. Its function is as follows. Required for maturation of 30S ribosomal subunits. The protein is Ribosome maturation factor RimP of Acetivibrio thermocellus (strain ATCC 27405 / DSM 1237 / JCM 9322 / NBRC 103400 / NCIMB 10682 / NRRL B-4536 / VPI 7372) (Clostridium thermocellum).